The following is a 203-amino-acid chain: GTP cyclohydrolase 1 (203 aa).

Positions 87, 90, and 158 each coordinate Zn(2+).

It belongs to the GTP cyclohydrolase I family. In terms of assembly, toroid-shaped homodecamer, composed of two pentamers of five dimers.

It catalyses the reaction GTP + H2O = 7,8-dihydroneopterin 3'-triphosphate + formate + H(+). It participates in cofactor biosynthesis; 7,8-dihydroneopterin triphosphate biosynthesis; 7,8-dihydroneopterin triphosphate from GTP: step 1/1. In Xylella fastidiosa (strain 9a5c), this protein is GTP cyclohydrolase 1.